The sequence spans 224 residues: Phosphoribosylformylglycinamidine synthase subunit PurQ (224 aa).

Residues 3-224 form the Glutamine amidotransferase type-1 domain; that stretch reads FGVVVFPGSN…GLLEKVVALA (222 aa). The active-site Nucleophile is Cys-86. Active-site residues include His-195 and Glu-197.

In terms of assembly, part of the FGAM synthase complex composed of 1 PurL, 1 PurQ and 2 PurS subunits.

It localises to the cytoplasm. The catalysed reaction is N(2)-formyl-N(1)-(5-phospho-beta-D-ribosyl)glycinamide + L-glutamine + ATP + H2O = 2-formamido-N(1)-(5-O-phospho-beta-D-ribosyl)acetamidine + L-glutamate + ADP + phosphate + H(+). It catalyses the reaction L-glutamine + H2O = L-glutamate + NH4(+). The protein operates within purine metabolism; IMP biosynthesis via de novo pathway; 5-amino-1-(5-phospho-D-ribosyl)imidazole from N(2)-formyl-N(1)-(5-phospho-D-ribosyl)glycinamide: step 1/2. Its function is as follows. Part of the phosphoribosylformylglycinamidine synthase complex involved in the purines biosynthetic pathway. Catalyzes the ATP-dependent conversion of formylglycinamide ribonucleotide (FGAR) and glutamine to yield formylglycinamidine ribonucleotide (FGAM) and glutamate. The FGAM synthase complex is composed of three subunits. PurQ produces an ammonia molecule by converting glutamine to glutamate. PurL transfers the ammonia molecule to FGAR to form FGAM in an ATP-dependent manner. PurS interacts with PurQ and PurL and is thought to assist in the transfer of the ammonia molecule from PurQ to PurL. The polypeptide is Phosphoribosylformylglycinamidine synthase subunit PurQ (Nostoc sp. (strain PCC 7120 / SAG 25.82 / UTEX 2576)).